The following is a 481-amino-acid chain: UDP-N-acetylmuramoyl-L-alanyl-D-glutamate--L-lysine ligase (481 aa).

S42 contributes to the UDP-N-acetyl-alpha-D-muramoyl-L-alanyl-D-glutamate binding site. Position 118–124 (118–124 (GTKGKTT)) interacts with ATP. UDP-N-acetyl-alpha-D-muramoyl-L-alanyl-D-glutamate-binding positions include 160–161 (TT), S187, and R195. N6-carboxylysine is present on K229. The L-lysine recognition motif motif lies at 404 to 407 (DDPN).

This sequence belongs to the MurCDEF family. MurE subfamily. Post-translationally, carboxylation is probably crucial for Mg(2+) binding and, consequently, for the gamma-phosphate positioning of ATP.

The protein resides in the cytoplasm. The catalysed reaction is UDP-N-acetyl-alpha-D-muramoyl-L-alanyl-D-glutamate + L-lysine + ATP = UDP-N-acetyl-alpha-D-muramoyl-L-alanyl-gamma-D-glutamyl-L-lysine + ADP + phosphate + H(+). Its pathway is cell wall biogenesis; peptidoglycan biosynthesis. Functionally, catalyzes the addition of L-lysine to the nucleotide precursor UDP-N-acetylmuramoyl-L-alanyl-D-glutamate (UMAG) in the biosynthesis of bacterial cell-wall peptidoglycan. This chain is UDP-N-acetylmuramoyl-L-alanyl-D-glutamate--L-lysine ligase, found in Streptococcus suis (strain 98HAH33).